Consider the following 464-residue polypeptide: Histidine--tRNA ligase (464 aa).

It belongs to the class-II aminoacyl-tRNA synthetase family. As to quaternary structure, homodimer.

It localises to the cytoplasm. It catalyses the reaction tRNA(His) + L-histidine + ATP = L-histidyl-tRNA(His) + AMP + diphosphate + H(+). In Stenotrophomonas maltophilia (strain K279a), this protein is Histidine--tRNA ligase.